We begin with the raw amino-acid sequence, 446 residues long: Tripartite motif-containing protein 43B (446 aa).

Residues 15–56 (CVICLNYLVDPVTICCGHSFCRPCLCLSWEEAQSPANCPACR) form an RING-type zinc finger. The B box-type zinc-finger motif lies at 88–129 (SEKQICGTHRQTKKMFCDMDKSLLCLLCSNSQEHGAHKHYPI). Zn(2+) contacts are provided by Cys93, His96, Cys115, and His121. 2 coiled-coil regions span residues 129–158 (IEEA…QRNL) and 190–220 (LHKE…VKMD). The 178-residue stretch at 269-446 (ELTAGPITGL…VRPFFYTGHR (178 aa)) folds into the B30.2/SPRY domain.

This sequence belongs to the TRIM/RBCC family.

This Homo sapiens (Human) protein is Tripartite motif-containing protein 43B (TRIM43B).